The primary structure comprises 139 residues: Hydrogenase maturation factor HypA (139 aa).

Position 2 (H2) interacts with Ni(2+). Zn(2+) is bound by residues C73, C76, C110, and C113.

It belongs to the HypA/HybF family.

Its function is as follows. Involved in the maturation of [NiFe] hydrogenases. Required for nickel insertion into the metal center of the hydrogenase. This is Hydrogenase maturation factor HypA from Pyrococcus furiosus (strain ATCC 43587 / DSM 3638 / JCM 8422 / Vc1).